We begin with the raw amino-acid sequence, 399 residues long: Glutamyl-tRNA reductase (399 aa).

Residues 45–48, Ser101, 106–108, and Gln112 contribute to the substrate site; these read TCNR and EDQ. Cys46 (nucleophile) is an active-site residue. NADP(+) is bound at residue 177–182; that stretch reads GFGKIG.

The protein belongs to the glutamyl-tRNA reductase family. Homodimer.

It carries out the reaction (S)-4-amino-5-oxopentanoate + tRNA(Glu) + NADP(+) = L-glutamyl-tRNA(Glu) + NADPH + H(+). The protein operates within porphyrin-containing compound metabolism; protoporphyrin-IX biosynthesis; 5-aminolevulinate from L-glutamyl-tRNA(Glu): step 1/2. Its function is as follows. Catalyzes the NADPH-dependent reduction of glutamyl-tRNA(Glu) to glutamate 1-semialdehyde (GSA). This is Glutamyl-tRNA reductase from Clostridium kluyveri (strain ATCC 8527 / DSM 555 / NBRC 12016 / NCIMB 10680 / K1).